Consider the following 236-residue polypeptide: MKYKLLPCLLAIFLTGCDRTEVTLSFTPEMASFSNEFDFDPLRGPVKDFTQTLMDEQGEVTKRVSGTLSEEGCFDSLELLDLENNTVVALVLDANYYRDAQTLEKRVRLQGKCQLAELPSAGVSWETDDNGFVIKASSKQMQMEYRYDDQGYPLGKTTKSNDKTLSVSATPSTDPIKKLDYTAVTLLNNQRVGNVKQSCEYDSHANPVDCQLIIVDEGVKPAVERVYTIKNTIDYY.

The signal sequence occupies residues 1–16 (MKYKLLPCLLAIFLTG). A lipid anchor (N-palmitoyl cysteine) is attached at C17. C17 carries the S-diacylglycerol cysteine lipid modification.

It belongs to the UPF0257 family.

It localises to the cell membrane. This chain is UPF0257 lipoprotein YnfC, found in Escherichia coli O7:K1 (strain IAI39 / ExPEC).